A 166-amino-acid chain; its full sequence is Keratin, type II cytoskeletal 68 kDa, component IB (166 aa).

Residues 1–41 (EAKDDLARLLRDYQDAMNVKLALDVEIATYRKLLEGEECRM) form the IF rod domain. A coil 2B region spans residues 1-41 (EAKDDLARLLRDYQDAMNVKLALDVEIATYRKLLEGEECRM). Residues 42 to 166 (SGECPSAVSI…FSQSSQRTSR (125 aa)) form a tail region. Gly residues predominate over residues 122-146 (GFGGGSSGFGSGSGGRSGVSGGGLS). The tract at residues 122–166 (GFGGGSSGFGSGSGGRSGVSGGGLSSGSSRGGSVRFSQSSQRTSR) is disordered. The segment covering 147-166 (SGSSRGGSVRFSQSSQRTSR) has biased composition (low complexity).

This sequence belongs to the intermediate filament family. As to quaternary structure, heterotetramer of two type I and two type II keratins.

The protein is Keratin, type II cytoskeletal 68 kDa, component IB of Bos taurus (Bovine).